Here is a 235-residue protein sequence, read N- to C-terminus: Thaumatin II (235 aa).

The first 22 residues, 1–22 (MAATTCFFFLFPFLLLLTLSRA), serve as a signal peptide directing secretion. Cystine bridges form between C31/C226, C78/C88, C93/C99, C143/C215, C148/C199, C156/C167, C171/C180, and C181/C186. A propeptide spans 230-235 (LELEDE) (removed in mature form).

It belongs to the thaumatin family.

It localises to the cytoplasmic vesicle. Taste-modifying protein; intensely sweet-tasting. It is 100000 times sweeter than sucrose on a molar basis. The sequence is that of Thaumatin II from Thaumatococcus daniellii (Katemfe).